A 229-amino-acid chain; its full sequence is Protein fmp52-2, mitochondrial (229 aa).

The transit peptide at 1–44 directs the protein to the mitochondrion; it reads MTAAAVFGCTGAVGSQILATLLASDAFSSVATVSRKLPTAESPK.

It belongs to the FMP52 family.

It is found in the mitochondrion outer membrane. This Aspergillus terreus (strain NIH 2624 / FGSC A1156) protein is Protein fmp52-2, mitochondrial (fmp522).